A 461-amino-acid chain; its full sequence is Argininosuccinate lyase (461 aa).

The protein belongs to the lyase 1 family. Argininosuccinate lyase subfamily.

The protein resides in the cytoplasm. It carries out the reaction 2-(N(omega)-L-arginino)succinate = fumarate + L-arginine. It participates in amino-acid biosynthesis; L-arginine biosynthesis; L-arginine from L-ornithine and carbamoyl phosphate: step 3/3. The chain is Argininosuccinate lyase from Clostridium beijerinckii (strain ATCC 51743 / NCIMB 8052) (Clostridium acetobutylicum).